We begin with the raw amino-acid sequence, 238 residues long: Phosphoribosylaminoimidazole-succinocarboxamide synthase (238 aa).

This sequence belongs to the SAICAR synthetase family.

The enzyme catalyses 5-amino-1-(5-phospho-D-ribosyl)imidazole-4-carboxylate + L-aspartate + ATP = (2S)-2-[5-amino-1-(5-phospho-beta-D-ribosyl)imidazole-4-carboxamido]succinate + ADP + phosphate + 2 H(+). It participates in purine metabolism; IMP biosynthesis via de novo pathway; 5-amino-1-(5-phospho-D-ribosyl)imidazole-4-carboxamide from 5-amino-1-(5-phospho-D-ribosyl)imidazole-4-carboxylate: step 1/2. The polypeptide is Phosphoribosylaminoimidazole-succinocarboxamide synthase (Desulfitobacterium hafniense (strain DSM 10664 / DCB-2)).